A 276-amino-acid polypeptide reads, in one-letter code: Protein canopy homolog 3 (276 aa).

The first 16 residues, 1-16 (MNVFISVVLFLGSARA), serve as a signal peptide directing secretion. A Saposin B-type domain is found at 30-269 (NKCEVCKFVS…EEEIQKKVPL (240 aa)). Disulfide bonds link cysteine 32–cysteine 190, cysteine 35–cysteine 178, and cysteine 88–cysteine 150. A coiled-coil region spans residues 137–162 (NETSAEVADLKKQCDVMVEQYEDVIE). The segment at 206–276 (AEDKKKKKGK…VPLNQPKTEL (71 aa)) is disordered. Basic residues-rich tracts occupy residues 210–219 (KKKKGKKKKG) and 228–239 (KEKKVKKKKKKS). Residues 240-252 (KISDSESSKRRME) show a composition bias toward basic and acidic residues.

The protein belongs to the canopy family.

It is found in the endoplasmic reticulum. Toll-like receptor (TLR)-specific co-chaperone for HSP90B1. Required for proper TLR folding and hence controls TLR exit from the endoplasmic reticulum. Consequently, required for immune responses. In Danio rerio (Zebrafish), this protein is Protein canopy homolog 3 (cnpy3).